A 198-amino-acid polypeptide reads, in one-letter code: MAKILVLYYSMYGHIETMAHAVADGANRVDGVEVVVKRVPETMQAEAFAKAGGKTQNAPVATPQELAEYDAIIFGTPTRFGNMSGQMRTFLDQTGGLWASGALYGKIASVFSSTGTGGGQEQTITSTWTTLAHHGMIIVPIGYGAQELFDISQVRGGTPYGATTIAGGDGSRQPSEEELAIARYQGEHVAKLAVKVHG.

The Flavodoxin-like domain maps to 4-189 (ILVLYYSMYG…AIARYQGEHV (186 aa)). FMN-binding positions include 10–15 (SMYGHI) and 78–80 (TRF). Tyrosine 12 serves as a coordination point for NAD(+). Position 98 (tryptophan 98) interacts with substrate. FMN is bound by residues 113–118 (STGTGG) and histidine 133.

This sequence belongs to the WrbA family. The cofactor is FMN.

It carries out the reaction a quinone + NADH + H(+) = a quinol + NAD(+). It catalyses the reaction a quinone + NADPH + H(+) = a quinol + NADP(+). In Klebsiella pneumoniae (strain 342), this protein is NAD(P)H dehydrogenase (quinone).